A 126-amino-acid chain; its full sequence is Large ribosomal subunit protein uL22 (126 aa).

Belongs to the universal ribosomal protein uL22 family. In terms of assembly, part of the 50S ribosomal subunit.

In terms of biological role, this protein binds specifically to 23S rRNA; its binding is stimulated by other ribosomal proteins, e.g. L4, L17, and L20. It is important during the early stages of 50S assembly. It makes multiple contacts with different domains of the 23S rRNA in the assembled 50S subunit and ribosome. Its function is as follows. The globular domain of the protein is located near the polypeptide exit tunnel on the outside of the subunit, while an extended beta-hairpin is found that lines the wall of the exit tunnel in the center of the 70S ribosome. The chain is Large ribosomal subunit protein uL22 from Jannaschia sp. (strain CCS1).